We begin with the raw amino-acid sequence, 581 residues long: Rhodanese-like domain-containing protein 6 (581 aa).

Positions 158–258 (ENKELVLLDA…YLEQFPSGGF (101 aa)) constitute a Rhodanese domain. The active-site Cysteine persulfide intermediate is the C216.

The polypeptide is Rhodanese-like domain-containing protein 6 (STR6) (Arabidopsis thaliana (Mouse-ear cress)).